A 308-amino-acid polypeptide reads, in one-letter code: Apolipoprotein F (308 aa).

This sequence belongs to the apolipoprotein F family.

The protein resides in the secreted. Minor apolipoprotein that associates with LDL. Inhibits cholesteryl ester transfer protein (CETP) activity and appears to be an important regulator of cholesterol transport. Also associates to a lesser degree with VLDL, Apo-AI and Apo-AII. The sequence is that of Apolipoprotein F (Apof) from Rattus norvegicus (Rat).